A 134-amino-acid chain; its full sequence is Perlwapin (134 aa).

3 consecutive WAP domains span residues 2–45, 46–89, and 90–132; these read GPNL…CVPK, PKPG…YRPE, and KPGS…EKPC. 12 disulfide bridges follow: cysteine 8–cysteine 34, cysteine 17–cysteine 38, cysteine 21–cysteine 33, cysteine 27–cysteine 42, cysteine 51–cysteine 77, cysteine 59–cysteine 82, cysteine 64–cysteine 76, cysteine 70–cysteine 85, cysteine 94–cysteine 121, cysteine 104–cysteine 124, cysteine 108–cysteine 120, and cysteine 114–cysteine 128.

Nacreous layer of shell.

Inhibits growth of calcium carbonate crystals. May inhibit growth of certain crystallographic planes in the mineral phase of nacre in the shell. The chain is Perlwapin from Haliotis laevigata (Smooth Australian abalone).